A 265-amino-acid polypeptide reads, in one-letter code: Ribosomal RNA small subunit methyltransferase A (265 aa).

Residues Asn13, Leu15, Gly40, Glu61, Asp85, and Asn103 each contribute to the S-adenosyl-L-methionine site.

Belongs to the class I-like SAM-binding methyltransferase superfamily. rRNA adenine N(6)-methyltransferase family. RsmA subfamily.

The protein resides in the cytoplasm. The catalysed reaction is adenosine(1518)/adenosine(1519) in 16S rRNA + 4 S-adenosyl-L-methionine = N(6)-dimethyladenosine(1518)/N(6)-dimethyladenosine(1519) in 16S rRNA + 4 S-adenosyl-L-homocysteine + 4 H(+). In terms of biological role, specifically dimethylates two adjacent adenosines (A1518 and A1519) in the loop of a conserved hairpin near the 3'-end of 16S rRNA in the 30S particle. May play a critical role in biogenesis of 30S subunits. In Aromatoleum aromaticum (strain DSM 19018 / LMG 30748 / EbN1) (Azoarcus sp. (strain EbN1)), this protein is Ribosomal RNA small subunit methyltransferase A.